The sequence spans 180 residues: Interleukin-17B (180 aa).

Positions Met-1–Gly-20 are cleaved as a signal peptide. The tract at residues Pro-22 to Gln-44 is disordered. N-linked (GlcNAc...) asparagine glycosylation is present at Asn-75. 2 cysteine pairs are disulfide-bonded: Cys-121/Cys-176 and Cys-126/Cys-178.

This sequence belongs to the IL-17 family. In terms of tissue distribution, expressed in adult pancreas, small intestine, stomach, spinal cord and testis. Less pronounced expression in prostate, colon mucosal lining, and ovary.

Its subcellular location is the secreted. In terms of biological role, stimulates the release of tumor necrosis factor alpha and IL-1-beta from the monocytic cell line THP-1. The chain is Interleukin-17B (IL17B) from Homo sapiens (Human).